The primary structure comprises 320 residues: Acetyl-coenzyme A carboxylase carboxyl transferase subunit beta (320 aa).

The CoA carboxyltransferase N-terminal domain occupies 25–294; it reads VWTKCDSCGQ…AKDEDELLGE (270 aa). Positions 29, 32, 48, and 51 each coordinate Zn(2+). The C4-type zinc finger occupies 29 to 51; that stretch reads CDSCGQVLYRAELERNLEVCPKC. Over residues 295–310 the composition is skewed to acidic residues; sequence EMIADDIESSDNEPEI. Residues 295–320 are disordered; the sequence is EMIADDIESSDNEPEINIETNKKEDV.

It belongs to the AccD/PCCB family. Acetyl-CoA carboxylase is a heterohexamer composed of biotin carboxyl carrier protein (AccB), biotin carboxylase (AccC) and two subunits each of ACCase subunit alpha (AccA) and ACCase subunit beta (AccD). Zn(2+) is required as a cofactor.

It is found in the cytoplasm. It catalyses the reaction N(6)-carboxybiotinyl-L-lysyl-[protein] + acetyl-CoA = N(6)-biotinyl-L-lysyl-[protein] + malonyl-CoA. It participates in lipid metabolism; malonyl-CoA biosynthesis; malonyl-CoA from acetyl-CoA: step 1/1. Functionally, component of the acetyl coenzyme A carboxylase (ACC) complex. Biotin carboxylase (BC) catalyzes the carboxylation of biotin on its carrier protein (BCCP) and then the CO(2) group is transferred by the transcarboxylase to acetyl-CoA to form malonyl-CoA. The sequence is that of Acetyl-coenzyme A carboxylase carboxyl transferase subunit beta from Proteus mirabilis (strain HI4320).